Reading from the N-terminus, the 153-residue chain is UPF0756 membrane protein Bcer98_3279 (153 aa).

Helical transmembrane passes span 8-28 (FLFI…IVAI), 54-74 (LGVT…EIGF), 87-107 (WIAL…LQLL), and 117-137 (LVFG…GPLI).

Belongs to the UPF0756 family.

The protein localises to the cell membrane. The sequence is that of UPF0756 membrane protein Bcer98_3279 from Bacillus cytotoxicus (strain DSM 22905 / CIP 110041 / 391-98 / NVH 391-98).